The primary structure comprises 412 residues: Polyferredoxin protein MvhB (412 aa).

4Fe-4S ferredoxin-type domains lie at 1–29, 30–57, 67–96, 97–127, 138–166, 168–197, 207–236, 238–266, 276–305, 314–345, 357–386, and 385–412; these read MIVV…VTPE, DVIY…IEDL, GRIV…LDEG, KVKK…VEGI, EGPI…LEKV, GVIE…ISGK, RKFE…PKSS, LTVE…LDVE, EGLV…VVTR, EKVD…LVDM, KRVQ…LTDE, and DEKV…LSLK. Residues cysteine 9, cysteine 12, cysteine 15, and cysteine 19 each coordinate [4Fe-4S] cluster. Residues cysteine 76, cysteine 79, cysteine 82, cysteine 86, cysteine 107, cysteine 110, cysteine 113, cysteine 117, cysteine 146, cysteine 149, cysteine 152, cysteine 156, cysteine 177, cysteine 180, cysteine 183, cysteine 187, cysteine 216, cysteine 219, cysteine 222, cysteine 226, cysteine 246, cysteine 249, cysteine 252, and cysteine 256 each contribute to the [4Fe-4S] cluster site. [4Fe-4S] cluster contacts are provided by cysteine 325, cysteine 328, cysteine 331, cysteine 335, cysteine 366, cysteine 369, cysteine 372, cysteine 376, cysteine 394, cysteine 397, cysteine 400, and cysteine 404.

Requires [4Fe-4S] cluster as cofactor.

The polypeptide is Polyferredoxin protein MvhB (mvhB) (Methanothermobacter marburgensis (strain ATCC BAA-927 / DSM 2133 / JCM 14651 / NBRC 100331 / OCM 82 / Marburg) (Methanobacterium thermoautotrophicum)).